A 376-amino-acid polypeptide reads, in one-letter code: MAKQDYYEILGVSKTAEEREIKKAYKRLAMKYHPDRNQGDKEAEAKFKEIKEAYEVLTDSQKRAAYDQYGHAAFEQGGMGGGGFGGGADFSDIFGDVFGDIFGGGRGRQRAARGADLRYNMELTLEEAVRGVTKEIRIPTLEECDVCHGSGAKPGTQPQTCPTCHGSGQVQMRQGFFAVQQTCPHCQGRGTLIKDPCNKCHGHGRVERSKTLSVKIPAGVDTGDRIRLAGEGEVGEHGAPAGDLYVQVQVKQHPIFEREGNNLYCEVPINFAMAALGGEIEVPTLDGRVKLKVPGETQTGKLFRMRGKGVKSVRGGAQGDLLCRVVVETPVGLNEKQKQLLQELQESFGGPTGEHNSPRSKSFFDGVKKFFDDLTR.

Positions 5-70 (DYYEILGVSK…QKRAAYDQYG (66 aa)) constitute a J domain. The CR-type zinc-finger motif lies at 131-209 (GVTKEIRIPT…CHGHGRVERS (79 aa)). Positions 144, 147, 161, 164, 183, 186, 197, and 200 each coordinate Zn(2+). 4 CXXCXGXG motif repeats span residues 144–151 (CDVCHGSG), 161–168 (CPTCHGSG), 183–190 (CPHCQGRG), and 197–204 (CNKCHGHG).

The protein belongs to the DnaJ family. Homodimer. Zn(2+) is required as a cofactor.

It localises to the cytoplasm. Functionally, participates actively in the response to hyperosmotic and heat shock by preventing the aggregation of stress-denatured proteins and by disaggregating proteins, also in an autonomous, DnaK-independent fashion. Unfolded proteins bind initially to DnaJ; upon interaction with the DnaJ-bound protein, DnaK hydrolyzes its bound ATP, resulting in the formation of a stable complex. GrpE releases ADP from DnaK; ATP binding to DnaK triggers the release of the substrate protein, thus completing the reaction cycle. Several rounds of ATP-dependent interactions between DnaJ, DnaK and GrpE are required for fully efficient folding. Also involved, together with DnaK and GrpE, in the DNA replication of plasmids through activation of initiation proteins. The chain is Chaperone protein DnaJ from Shigella dysenteriae serotype 1 (strain Sd197).